The primary structure comprises 238 residues: Phosphoribosylaminoimidazole-succinocarboxamide synthase (238 aa).

It belongs to the SAICAR synthetase family.

It carries out the reaction 5-amino-1-(5-phospho-D-ribosyl)imidazole-4-carboxylate + L-aspartate + ATP = (2S)-2-[5-amino-1-(5-phospho-beta-D-ribosyl)imidazole-4-carboxamido]succinate + ADP + phosphate + 2 H(+). It participates in purine metabolism; IMP biosynthesis via de novo pathway; 5-amino-1-(5-phospho-D-ribosyl)imidazole-4-carboxamide from 5-amino-1-(5-phospho-D-ribosyl)imidazole-4-carboxylate: step 1/2. The sequence is that of Phosphoribosylaminoimidazole-succinocarboxamide synthase from Nitrosococcus oceani (strain ATCC 19707 / BCRC 17464 / JCM 30415 / NCIMB 11848 / C-107).